The primary structure comprises 363 residues: Peptide chain release factor 1 (363 aa).

Q237 carries the post-translational modification N5-methylglutamine.

The protein belongs to the prokaryotic/mitochondrial release factor family. Post-translationally, methylated by PrmC. Methylation increases the termination efficiency of RF1.

Its subcellular location is the cytoplasm. Functionally, peptide chain release factor 1 directs the termination of translation in response to the peptide chain termination codons UAG and UAA. The protein is Peptide chain release factor 1 of Mesoplasma florum (strain ATCC 33453 / NBRC 100688 / NCTC 11704 / L1) (Acholeplasma florum).